The following is a 327-amino-acid chain: PDZ and LIM domain protein 1 (327 aa).

Threonine 2 carries the post-translational modification N-acetylthreonine. One can recognise a PDZ domain in the interval 3-85 (TQQIVLQGPG…NMTLTVSRSE (83 aa)). Phosphoserine is present on residues serine 90 and serine 130. Tyrosine 142 is modified (phosphotyrosine). The interval 161–186 (VESKTSASGEEANSRPSAQPHPSGGL) is disordered. One can recognise an LIM zinc-binding domain in the interval 256 to 315 (PICDKCGTGIVGVFVKLRDHHRHPECYVCTDCGINLKQKGHFFVGDQIYCEKHARERVTP). 8 residues coordinate Zn(2+): cysteine 258, cysteine 261, histidine 278, cysteine 281, cysteine 284, cysteine 287, cysteine 305, and histidine 308. At threonine 314 the chain carries Phosphothreonine. Tyrosine 319 is subject to Phosphotyrosine.

In terms of assembly, interacts with ACTN1. Interacts with ACTN2 and ACTN4. Interacts with PDLIM4. Expressed most abundantly in heart, lung and liver, moderately in spleen and skeletal muscle, and at extremely low levels (if at all) in testis and brain tissues.

Its subcellular location is the cytoplasm. The protein resides in the cytoskeleton. It is found in the myofibril. The protein localises to the sarcomere. It localises to the z line. In terms of biological role, cytoskeletal protein that may act as an adapter that brings other proteins (like kinases) to the cytoskeleton. Involved in assembly, disassembly and directioning of stress fibers in fibroblasts. Required for the localization of ACTN1 and PALLD to stress fibers. Required for cell migration and in maintaining cell polarity of fibroblasts. The chain is PDZ and LIM domain protein 1 (Pdlim1) from Rattus norvegicus (Rat).